The sequence spans 206 residues: ATP phosphoribosyltransferase (206 aa).

Belongs to the ATP phosphoribosyltransferase family. Short subfamily. In terms of assembly, heteromultimer composed of HisG and HisZ subunits.

It localises to the cytoplasm. The catalysed reaction is 1-(5-phospho-beta-D-ribosyl)-ATP + diphosphate = 5-phospho-alpha-D-ribose 1-diphosphate + ATP. The protein operates within amino-acid biosynthesis; L-histidine biosynthesis; L-histidine from 5-phospho-alpha-D-ribose 1-diphosphate: step 1/9. In terms of biological role, catalyzes the condensation of ATP and 5-phosphoribose 1-diphosphate to form N'-(5'-phosphoribosyl)-ATP (PR-ATP). Has a crucial role in the pathway because the rate of histidine biosynthesis seems to be controlled primarily by regulation of HisG enzymatic activity. The sequence is that of ATP phosphoribosyltransferase from Geobacillus sp. (strain WCH70).